The sequence spans 65 residues: Small ribosomal subunit protein eS17 (65 aa).

This sequence belongs to the eukaryotic ribosomal protein eS17 family.

This Methanocella arvoryzae (strain DSM 22066 / NBRC 105507 / MRE50) protein is Small ribosomal subunit protein eS17.